Consider the following 425-residue polypeptide: Serine--tRNA ligase (425 aa).

226 to 228 (TSE) contacts L-serine. ATP is bound by residues 257–259 (RRE) and valine 273. Position 280 (glutamate 280) interacts with L-serine. An ATP-binding site is contributed by 344–347 (ELTS). An L-serine-binding site is contributed by threonine 382.

The protein belongs to the class-II aminoacyl-tRNA synthetase family. Type-1 seryl-tRNA synthetase subfamily. In terms of assembly, homodimer. The tRNA molecule binds across the dimer.

The protein localises to the cytoplasm. It carries out the reaction tRNA(Ser) + L-serine + ATP = L-seryl-tRNA(Ser) + AMP + diphosphate + H(+). It catalyses the reaction tRNA(Sec) + L-serine + ATP = L-seryl-tRNA(Sec) + AMP + diphosphate + H(+). It participates in aminoacyl-tRNA biosynthesis; selenocysteinyl-tRNA(Sec) biosynthesis; L-seryl-tRNA(Sec) from L-serine and tRNA(Sec): step 1/1. In terms of biological role, catalyzes the attachment of serine to tRNA(Ser). Is also able to aminoacylate tRNA(Sec) with serine, to form the misacylated tRNA L-seryl-tRNA(Sec), which will be further converted into selenocysteinyl-tRNA(Sec). This is Serine--tRNA ligase from Mycobacterium avium (strain 104).